A 421-amino-acid polypeptide reads, in one-letter code: Telomeric repeat-binding factor 1 (421 aa).

The tract at residues 1–30 (MAETVSSAARDAPSREGWTDSDSPEQEEVG) is disordered. Ala-2 is modified (N-acetylalanine). Positions 49 to 255 (ENAELVAEVE…AATKVVENEK (207 aa)) are TRFH mediates dimerization. Lys-200 participates in a covalent cross-link: Glycyl lysine isopeptide (Lys-Gly) (interchain with G-Cter in SUMO2). Ser-206 is modified (phosphoserine; by ATM). The tract at residues 252 to 365 (ENEKARTQAS…PDTDDKSGRR (114 aa)) is interaction with RLIM. Basic and acidic residues predominate over residues 253–266 (NEKARTQASKDRPD). The disordered stretch occupies residues 253–366 (NEKARTQASK…DTDDKSGRRK (114 aa)). Positions 284 to 310 (VNGQQSTETEPLVDTVSSIRSHKNALS) are enriched in polar residues. The Nuclear localization signal signature appears at 313–367 (KHRRAPSDFSRNEARTGTLQCETTMERNRRTSGRNRLCVSENQPDTDDKSGRRKR). Residues 362–419 (SGRRKRQTWLWEEDRILKCGVKKYGEGNWAKILSHYKFNNRTSVMLKDRWRTMKRLKL) enclose the HTH myb-type domain. Residues 390–415 (WAKILSHYKFNNRTSVMLKDRWRTMK) constitute a DNA-binding region (H-T-H motif).

In terms of assembly, homodimer; can contain both isoforms. Found in a complex with POT1; TINF2 and TNKS1. Interacts with ATM, TINF2, TNKS1, TNKS2, PINX1, NEK2 and MAPRE1. Component of the shelterin complex (telosome) composed of TERF1, TERF2, TINF2, TERF2IP ACD and POT1. Interacts with RLIM (via N-terminus). Interacts with FBXO4. Interaction with TINF2 protects against interaction with FBXO4 and subsequent polyubiquitination and proteasomal degradation. Interacts with GNL3L; this interaction promotes homodimerization. Interacts with TIN2. Interactions with GNL3L and TIN2 are mutually exclusive. Interacts with RTEL1. Interacts with CCDC79/TERB1. Phosphorylated preferentially on Ser-219 in an ATM-dependent manner in response to ionizing DNA damage. In terms of processing, ADP-ribosylation by TNKS1 or TNKS2 diminishes its ability to bind to telomeric DNA. Post-translationally, ubiquitinated by RLIM/RNF12, leading to its degradation by the proteasome. Ubiquitinated by a SCF (SKP1-CUL1-F-box protein) ubiquitin-protein ligase complex, leading to its degradation by the proteasome.

It is found in the nucleus. Its subcellular location is the chromosome. It localises to the telomere. The protein resides in the cytoplasm. The protein localises to the cytoskeleton. It is found in the spindle. In terms of biological role, binds the telomeric double-stranded 5'-TTAGGG-3' repeat and negatively regulates telomere length. Involved in the regulation of the mitotic spindle. Component of the shelterin complex (telosome) that is involved in the regulation of telomere length and protection. Shelterin associates with arrays of double-stranded 5'-TTAGGG-3' repeats added by telomerase and protects chromosome ends; without its protective activity, telomeres are no longer hidden from the DNA damage surveillance and chromosome ends are inappropriately processed by DNA repair pathways. The protein is Telomeric repeat-binding factor 1 (Terf1) of Mus musculus (Mouse).